Consider the following 482-residue polypeptide: tRNA sulfurtransferase (482 aa).

The 105-residue stretch at 61–165 (AEVLEILTHT…GDKLNQVLAR (105 aa)) folds into the THUMP domain. ATP contacts are provided by residues 183-184 (LI), lysine 265, glycine 287, and glutamine 296. Cysteines 344 and 456 form a disulfide. One can recognise a Rhodanese domain in the interval 404–482 (VEEHAVVLDI…GFNNVKVYRP (79 aa)). The active-site Cysteine persulfide intermediate is the cysteine 456.

Belongs to the ThiI family.

It is found in the cytoplasm. The enzyme catalyses [ThiI sulfur-carrier protein]-S-sulfanyl-L-cysteine + a uridine in tRNA + 2 reduced [2Fe-2S]-[ferredoxin] + ATP + H(+) = [ThiI sulfur-carrier protein]-L-cysteine + a 4-thiouridine in tRNA + 2 oxidized [2Fe-2S]-[ferredoxin] + AMP + diphosphate. It carries out the reaction [ThiS sulfur-carrier protein]-C-terminal Gly-Gly-AMP + S-sulfanyl-L-cysteinyl-[cysteine desulfurase] + AH2 = [ThiS sulfur-carrier protein]-C-terminal-Gly-aminoethanethioate + L-cysteinyl-[cysteine desulfurase] + A + AMP + 2 H(+). It participates in cofactor biosynthesis; thiamine diphosphate biosynthesis. Catalyzes the ATP-dependent transfer of a sulfur to tRNA to produce 4-thiouridine in position 8 of tRNAs, which functions as a near-UV photosensor. Also catalyzes the transfer of sulfur to the sulfur carrier protein ThiS, forming ThiS-thiocarboxylate. This is a step in the synthesis of thiazole, in the thiamine biosynthesis pathway. The sulfur is donated as persulfide by IscS. The chain is tRNA sulfurtransferase from Vibrio parahaemolyticus serotype O3:K6 (strain RIMD 2210633).